A 416-amino-acid polypeptide reads, in one-letter code: MNFRLHGAFSNPSFVKIFFTKASPERRLTCFHVTKHGYSFQTDLHDYRKIMKFVISRNELGNLIKKVQNVVPQSTPIPVLTHVLIESCNDELVFTATDLTVSTRCVVKAKVYESGSVTIPSRRFFQLIRELTEANIEVAAHSGEMATITSGSSCFRLLSMGKEDFPMLPDMQNALRFTLDSERLKDMFQRTSFAVSREESRYVLTGVLLSIANGTMTVVGTDGKRLAKIDTEISLDPSFSGDYIIPIKAVEEIIRMSSEDVQSTIFLDQTKIAVECGNTLLVTKLLSGEFPDFSPVISTHSSVQLDLHREELISLLKQVALFTNESSHSVKFSFSPGELTLTANCTKVGEGKVSMAVNYTGETLEIAFNPFFFLDILKHSRDELVQLGISDSYNPGIITDSTRSLFVIMPMRLHDD.

The protein belongs to the beta sliding clamp family. As to quaternary structure, forms a ring-shaped head-to-tail homodimer around DNA which binds and tethers DNA polymerases and other proteins to the DNA. The DNA replisome complex has a single clamp-loading complex (3 tau and 1 each of delta, delta', psi and chi subunits) which binds 3 Pol III cores (1 core on the leading strand and 2 on the lagging strand) each with a beta sliding clamp dimer. Additional proteins in the replisome are other copies of gamma, psi and chi, Ssb, DNA helicase and RNA primase.

The protein resides in the cytoplasm. Functionally, confers DNA tethering and processivity to DNA polymerases and other proteins. Acts as a clamp, forming a ring around DNA (a reaction catalyzed by the clamp-loading complex) which diffuses in an ATP-independent manner freely and bidirectionally along dsDNA. Initially characterized for its ability to contact the catalytic subunit of DNA polymerase III (Pol III), a complex, multichain enzyme responsible for most of the replicative synthesis in bacteria; Pol III exhibits 3'-5' exonuclease proofreading activity. The beta chain is required for initiation of replication as well as for processivity of DNA replication. The chain is Beta sliding clamp (dnaN) from Chlamydia trachomatis serovar D (strain ATCC VR-885 / DSM 19411 / UW-3/Cx).